Reading from the N-terminus, the 215-residue chain is Thiamine-phosphate synthase (215 aa).

4-amino-2-methyl-5-(diphosphooxymethyl)pyrimidine is bound by residues 37-41 (QLRIK) and N69. D70 and D89 together coordinate Mg(2+). A 4-amino-2-methyl-5-(diphosphooxymethyl)pyrimidine-binding site is contributed by S108. Position 134–136 (134–136 (TQT)) interacts with 2-[(2R,5Z)-2-carboxy-4-methylthiazol-5(2H)-ylidene]ethyl phosphate. K137 is a binding site for 4-amino-2-methyl-5-(diphosphooxymethyl)pyrimidine. Residues G166 and 186-187 (VS) contribute to the 2-[(2R,5Z)-2-carboxy-4-methylthiazol-5(2H)-ylidene]ethyl phosphate site.

The protein belongs to the thiamine-phosphate synthase family. Requires Mg(2+) as cofactor.

It carries out the reaction 2-[(2R,5Z)-2-carboxy-4-methylthiazol-5(2H)-ylidene]ethyl phosphate + 4-amino-2-methyl-5-(diphosphooxymethyl)pyrimidine + 2 H(+) = thiamine phosphate + CO2 + diphosphate. The catalysed reaction is 2-(2-carboxy-4-methylthiazol-5-yl)ethyl phosphate + 4-amino-2-methyl-5-(diphosphooxymethyl)pyrimidine + 2 H(+) = thiamine phosphate + CO2 + diphosphate. It catalyses the reaction 4-methyl-5-(2-phosphooxyethyl)-thiazole + 4-amino-2-methyl-5-(diphosphooxymethyl)pyrimidine + H(+) = thiamine phosphate + diphosphate. The protein operates within cofactor biosynthesis; thiamine diphosphate biosynthesis; thiamine phosphate from 4-amino-2-methyl-5-diphosphomethylpyrimidine and 4-methyl-5-(2-phosphoethyl)-thiazole: step 1/1. Condenses 4-methyl-5-(beta-hydroxyethyl)thiazole monophosphate (THZ-P) and 2-methyl-4-amino-5-hydroxymethyl pyrimidine pyrophosphate (HMP-PP) to form thiamine monophosphate (TMP). This is Thiamine-phosphate synthase from Yersinia pseudotuberculosis serotype I (strain IP32953).